The primary structure comprises 254 residues: Protein N-terminal and lysine N-methyltransferase EFM7 (254 aa).

S-adenosyl-L-methionine is bound by residues Trp57, 84 to 86, Asp106, Trp138, and Ser165; that span reads GAA.

The protein belongs to the class I-like SAM-binding methyltransferase superfamily. EFM7 family.

The protein localises to the cytoplasm. Functionally, S-adenosyl-L-methionine-dependent protein methyltransferase that trimethylates the N-terminal glycine 'Gly-2' of elongation factor 1-alpha, before also catalyzing the mono- and dimethylation of 'Lys-3'. In Debaryomyces hansenii (strain ATCC 36239 / CBS 767 / BCRC 21394 / JCM 1990 / NBRC 0083 / IGC 2968) (Yeast), this protein is Protein N-terminal and lysine N-methyltransferase EFM7.